A 258-amino-acid polypeptide reads, in one-letter code: Shikimate dehydrogenase (NADP(+)) (258 aa).

Residues 14–16 and Thr61 each bind shikimate; that span reads SES. The Proton acceptor role is filled by Lys65. Shikimate contacts are provided by Asn86 and Asp101. NADP(+) contacts are provided by residues 125 to 129 and Leu211; that span reads GSGGS. Tyr213 is a shikimate binding site. An NADP(+)-binding site is contributed by Gly234.

This sequence belongs to the shikimate dehydrogenase family. As to quaternary structure, homodimer.

The enzyme catalyses shikimate + NADP(+) = 3-dehydroshikimate + NADPH + H(+). The protein operates within metabolic intermediate biosynthesis; chorismate biosynthesis; chorismate from D-erythrose 4-phosphate and phosphoenolpyruvate: step 4/7. Involved in the biosynthesis of the chorismate, which leads to the biosynthesis of aromatic amino acids. Catalyzes the reversible NADPH linked reduction of 3-dehydroshikimate (DHSA) to yield shikimate (SA). This chain is Shikimate dehydrogenase (NADP(+)), found in Clostridium botulinum (strain 657 / Type Ba4).